A 57-amino-acid chain; its full sequence is UPF0337 protein SAV_1088 (57 aa).

2 stretches are compositionally biased toward basic and acidic residues: residues 1 to 15 (MAGD…EQAK) and 36 to 57 (QAEK…VFKH). The tract at residues 1–57 (MAGDQKAKAKMEQAKGKAKAAAGRAVGNERMAAEGQAEKSKGDARQAKEKTKDVFKH) is disordered.

The protein belongs to the UPF0337 (CsbD) family.

This is UPF0337 protein SAV_1088 from Streptomyces avermitilis (strain ATCC 31267 / DSM 46492 / JCM 5070 / NBRC 14893 / NCIMB 12804 / NRRL 8165 / MA-4680).